The following is a 365-amino-acid chain: Aminomethyltransferase (365 aa).

The protein belongs to the GcvT family. In terms of assembly, the glycine cleavage system is composed of four proteins: P, T, L and H.

It catalyses the reaction N(6)-[(R)-S(8)-aminomethyldihydrolipoyl]-L-lysyl-[protein] + (6S)-5,6,7,8-tetrahydrofolate = N(6)-[(R)-dihydrolipoyl]-L-lysyl-[protein] + (6R)-5,10-methylene-5,6,7,8-tetrahydrofolate + NH4(+). Functionally, the glycine cleavage system catalyzes the degradation of glycine. The chain is Aminomethyltransferase from Aeromonas hydrophila subsp. hydrophila (strain ATCC 7966 / DSM 30187 / BCRC 13018 / CCUG 14551 / JCM 1027 / KCTC 2358 / NCIMB 9240 / NCTC 8049).